The following is a 337-amino-acid chain: Primase homolog protein (337 aa).

The region spanning 205–304 is the Toprim domain; sequence SEIIIVEGEP…WLVKWPKKSE (100 aa). Glu211, Asp273, and Asp275 together coordinate Mg(2+).

Mg(2+) serves as cofactor.

May act as a DNA primase. The chain is Primase homolog protein from Arabidopsis thaliana (Mouse-ear cress).